Reading from the N-terminus, the 457-residue chain is Beta-1,4-mannosyltransferase egh (457 aa).

A run of 6 helical transmembrane segments spans residues 8 to 28 (LLHCTLLITVIVTFEVFSGGI), 35 to 55 (FTLVDPWTEYGQLATVLLYLL), 57 to 77 (FLTLLTLPQVLFNFCGLVFYN), 346 to 366 (LLGISVYSWVTMPLSTSNIIF), 378 to 398 (VDFVCAFIAAINIYMYVFGVI), and 415 to 435 (VLGAVCTIPVNVVIENVAVIW).

It belongs to the glycosyltransferase 2 family.

It localises to the membrane. In terms of biological role, glycosyltransferase with a proposed role in glycosphingolipid biosynthesis. Neurogenic protein implicated in epithelial development. Critical component of a differential oocyte-follicle cell adhesive system. The chain is Beta-1,4-mannosyltransferase egh (egh) from Drosophila melanogaster (Fruit fly).